Consider the following 362-residue polypeptide: Hepatic sodium/bile acid cotransporter (362 aa).

Residues 1–22 lie on the Extracellular side of the membrane; it reads MEVHNVSAPFNFSLPPGFGHRA. Asn-5 and Asn-11 each carry an N-linked (GlcNAc...) asparagine glycan. A helical transmembrane segment spans residues 23 to 44; the sequence is TDKALSIILVLMLLLIMLSLGC. Residues 45–47 lie on the Cytoplasmic side of the membrane; the sequence is TME. The helical transmembrane segment at 48-83 threads the bilayer; the sequence is FSKIKAHLWKPKGVIVALVAQFGIMPLAAFLLGKIF. The Extracellular portion of the chain corresponds to 84-86; sequence HLS. The chain crosses the membrane as a discontinuously helical span at residues 87-112; that stretch reads NIEALAILICGCSPGGNLSNLFTLAM. The Cytoplasmic segment spans residues 113 to 115; it reads KGD. The helical transmembrane segment at 116–142 threads the bilayer; sequence MNLSIVMTTCSSFSALGMMPLLLYVYS. Residues 143-156 are Extracellular-facing; sequence KGIYDGDLKDKVPY. The chain crosses the membrane as a helical span at residues 157 to 179; sequence KGIMISLVIVLIPCTIGIVLKSK. Over 180–183 the chain is Cytoplasmic; sequence RPHY. A helical transmembrane segment spans residues 184–217; it reads VPYILKGGMIITFLLSVAVTALSVINVGNSIMFV. Topologically, residues 218 to 219 are extracellular; it reads MT. Residues 220–243 form a helical membrane-spanning segment; that stretch reads PHLLATSSLMPFSGFLMGYILSAL. Residues 244 to 247 are Cytoplasmic-facing; it reads FQLN. The chain crosses the membrane as a discontinuously helical span at residues 248–273; that stretch reads PSCRRTISMETGFQNIQLCSTILNVT. At 274–280 the chain is on the extracellular side; that stretch reads FPPEVIG. A helical membrane pass occupies residues 281–311; that stretch reads PLFFFPLLYMIFQLAEGLLIIIIFRCYEKIK. Residues 312 to 362 are Cytoplasmic-facing; that stretch reads PPKDQTKITYKAAATEDATPAALEKGTHNGNIPPLQPGPSPNGLNSGQMAN. Thr-330 carries the post-translational modification Phosphothreonine. Positions 333–362 are disordered; sequence ALEKGTHNGNIPPLQPGPSPNGLNSGQMAN. The segment covering 353 to 362 has biased composition (polar residues); it reads NGLNSGQMAN.

This sequence belongs to the bile acid:sodium symporter (BASS) (TC 2.A.28) family. Highly expressed in liver and low expression in kidney.

The protein localises to the cell membrane. It carries out the reaction taurocholate(out) + 2 Na(+)(out) = taurocholate(in) + 2 Na(+)(in). The enzyme catalyses taurochenodeoxycholate(out) + 2 Na(+)(out) = taurochenodeoxycholate(in) + 2 Na(+)(in). The catalysed reaction is tauroursodeoxycholate(out) + 2 Na(+)(out) = tauroursodeoxycholate(in) + 2 Na(+)(in). It catalyses the reaction glycocholate(out) + 2 Na(+)(out) = glycocholate(in) + 2 Na(+)(in). It carries out the reaction estrone 3-sulfate(out) + 2 Na(+)(out) = estrone 3-sulfate(in) + 2 Na(+)(in). The enzyme catalyses cholate(out) + 2 Na(+)(out) = cholate(in) + 2 Na(+)(in). The catalysed reaction is tauronorcholate(out) + 2 Na(+)(out) = tauronorcholate(in) + 2 Na(+)(in). It catalyses the reaction taurodeoxycholate(out) + 2 Na(+)(out) = taurodeoxycholate(in) + 2 Na(+)(in). It carries out the reaction tauroallocholate(out) + 2 Na(+)(out) = tauroallocholate(in) + 2 Na(+)(in). The enzyme catalyses taurohyodeoxycholate(out) + 2 Na(+)(out) = taurohyodeoxycholate(in) + 2 Na(+)(in). The catalysed reaction is taurohyocholate(out) + 2 Na(+)(out) = taurohyocholate(in) + 2 Na(+)(in). It catalyses the reaction tauro-beta-muricholate(out) + 2 Na(+)(out) = tauro-beta-muricholate(in) + 2 Na(+)(in). With respect to regulation, the transport of bile acids is sodium-dependent. Functionally, as a major transporter of conjugated bile salts from plasma into the hepatocyte, it plays a key role in the enterohepatic circulation of bile salts necessary for the solubilization and absorption of dietary fat and fat-soluble vitamins. It is strictly dependent on the extracellular presence of sodium. It exhibits broad substrate specificity and transports various bile acids, such as taurocholate, cholate, as well as non-bile acid organic compounds, such as estrone sulfate. Works collaboratively with the ileal transporter (NTCP2), the organic solute transporter (OST), and the bile salt export pump (BSEP), to ensure efficacious biological recycling of bile acids during enterohepatic circulation. This chain is Hepatic sodium/bile acid cotransporter (Slc10a1), found in Rattus norvegicus (Rat).